The sequence spans 358 residues: DNA polymerase IV (358 aa).

Residues 4–185 (IIHIDMDCYF…LSLRKIPGVG (182 aa)) form the UmuC domain. Residues aspartate 8 and aspartate 103 each coordinate Mg(2+). Glutamate 104 is an active-site residue.

This sequence belongs to the DNA polymerase type-Y family. Monomer. It depends on Mg(2+) as a cofactor.

Its subcellular location is the cytoplasm. It catalyses the reaction DNA(n) + a 2'-deoxyribonucleoside 5'-triphosphate = DNA(n+1) + diphosphate. In terms of biological role, poorly processive, error-prone DNA polymerase involved in untargeted mutagenesis. Copies undamaged DNA at stalled replication forks, which arise in vivo from mismatched or misaligned primer ends. These misaligned primers can be extended by PolIV. Exhibits no 3'-5' exonuclease (proofreading) activity. May be involved in translesional synthesis, in conjunction with the beta clamp from PolIII. This chain is DNA polymerase IV, found in Shewanella baltica (strain OS185).